Here is an 82-residue protein sequence, read N- to C-terminus: Phosphoribosylformylglycinamidine synthase subunit PurS (82 aa).

This sequence belongs to the PurS family. As to quaternary structure, homodimer. Part of the FGAM synthase complex composed of 1 PurL, 1 PurQ and 2 PurS subunits.

It is found in the cytoplasm. It carries out the reaction N(2)-formyl-N(1)-(5-phospho-beta-D-ribosyl)glycinamide + L-glutamine + ATP + H2O = 2-formamido-N(1)-(5-O-phospho-beta-D-ribosyl)acetamidine + L-glutamate + ADP + phosphate + H(+). Its pathway is purine metabolism; IMP biosynthesis via de novo pathway; 5-amino-1-(5-phospho-D-ribosyl)imidazole from N(2)-formyl-N(1)-(5-phospho-D-ribosyl)glycinamide: step 1/2. Functionally, part of the phosphoribosylformylglycinamidine synthase complex involved in the purines biosynthetic pathway. Catalyzes the ATP-dependent conversion of formylglycinamide ribonucleotide (FGAR) and glutamine to yield formylglycinamidine ribonucleotide (FGAM) and glutamate. The FGAM synthase complex is composed of three subunits. PurQ produces an ammonia molecule by converting glutamine to glutamate. PurL transfers the ammonia molecule to FGAR to form FGAM in an ATP-dependent manner. PurS interacts with PurQ and PurL and is thought to assist in the transfer of the ammonia molecule from PurQ to PurL. The sequence is that of Phosphoribosylformylglycinamidine synthase subunit PurS from Thermotoga maritima (strain ATCC 43589 / DSM 3109 / JCM 10099 / NBRC 100826 / MSB8).